We begin with the raw amino-acid sequence, 237 residues long: 7-cyano-7-deazaguanine synthase (237 aa).

An ATP-binding site is contributed by 10–20 (FSGGQDSTTCL). Zn(2+) is bound by residues Cys189, Cys198, Cys201, and Cys204.

This sequence belongs to the QueC family. The cofactor is Zn(2+).

It catalyses the reaction 7-carboxy-7-deazaguanine + NH4(+) + ATP = 7-cyano-7-deazaguanine + ADP + phosphate + H2O + H(+). It functions in the pathway purine metabolism; 7-cyano-7-deazaguanine biosynthesis. Catalyzes the ATP-dependent conversion of 7-carboxy-7-deazaguanine (CDG) to 7-cyano-7-deazaguanine (preQ(0)). In Aeromonas salmonicida (strain A449), this protein is 7-cyano-7-deazaguanine synthase.